Reading from the N-terminus, the 104-residue chain is SPbeta prophage-derived stress response protein SCP1 (104 aa).

It localises to the cytoplasm. The protein is SPbeta prophage-derived stress response protein SCP1 (yorD) of Bacillus subtilis (strain 168).